A 231-amino-acid polypeptide reads, in one-letter code: GrpE protein homolog, mitochondrial (231 aa).

A disordered region spans residues 49-71 (SEKAGEKAEEKAEEQNLSAEEQK).

This sequence belongs to the GrpE family. As to quaternary structure, component of the PAM complex, at least composed of mtHsp70, MGE1, TIM44, PAM16, PAM17 and PAM18.

It localises to the mitochondrion matrix. In terms of biological role, essential component of the PAM complex, a complex required for the translocation of transit peptide-containing proteins from the inner membrane into the mitochondrial matrix in an ATP-dependent manner. Seems to control the nucleotide-dependent binding of SSC1 to substrate proteins. The chain is GrpE protein homolog, mitochondrial (mge1) from Candida glabrata (strain ATCC 2001 / BCRC 20586 / JCM 3761 / NBRC 0622 / NRRL Y-65 / CBS 138) (Yeast).